The chain runs to 660 residues: ATPase WRNIP1 (660 aa).

The UBZ4-type zinc-finger motif lies at 17–44; it reads QVQCPVCQQMMPAAHINSHLDRCLLLHP. 5 residues coordinate Zn(2+): Cys-20, Cys-23, His-31, His-35, and Cys-39. The tract at residues 50-191 is disordered; it reads PAAGPHRAGE…DDPGHWDADA (142 aa). Residues Ser-65 and Ser-75 each carry the phosphoserine modification. Residues 76 to 89 show a composition bias toward polar residues; that stretch reads ESSALKQPATPTAA. Residue Lys-81 forms a Glycyl lysine isopeptide (Lys-Gly) (interchain with G-Cter in ubiquitin) linkage. Thr-85 bears the Phosphothreonine mark. Residues Ser-91 and Ser-92 each carry the phosphoserine modification. Residues 92–104 are compositionally biased toward acidic residues; the sequence is SEGEGEEGDDGGE. Thr-116 is modified (phosphothreonine). A compositionally biased stretch (low complexity) spans 135–155; sequence ARKGLGKRPAAAAAAGSASPR. Residue Lys-141 forms a Glycyl lysine isopeptide (Lys-Gly) (interchain with G-Cter in ubiquitin) linkage. Ser-153 bears the Phosphoserine mark. The segment covering 159-182 has biased composition (acidic residues); the sequence is ETEAQEEEEAGVDGDGDADVDGED. Residue Lys-220 forms a Glycyl lysine isopeptide (Lys-Gly) (interchain with G-Cter in ubiquitin) linkage. An ATP-binding site is contributed by 265–271; the sequence is PGCGKTT. Glycyl lysine isopeptide (Lys-Gly) (interchain with G-Cter in ubiquitin) cross-links involve residues Lys-296, Lys-305, Lys-311, Lys-317, and Lys-330. A Glycyl lysine isopeptide (Lys-Gly) (interchain with G-Cter in SUMO2); alternate cross-link involves residue Lys-477. Lys-477 is covalently cross-linked (Glycyl lysine isopeptide (Lys-Gly) (interchain with G-Cter in ubiquitin); alternate). Phosphotyrosine occurs at positions 529 and 557. Lys-622 is covalently cross-linked (Glycyl lysine isopeptide (Lys-Gly) (interchain with G-Cter in ubiquitin)). Lys-628 participates in a covalent cross-link: Glycyl lysine isopeptide (Lys-Gly) (interchain with G-Cter in ubiquitin); alternate. Lys-628 is modified (N6-acetyllysine; alternate). Lys-631 is covalently cross-linked (Glycyl lysine isopeptide (Lys-Gly) (interchain with G-Cter in ubiquitin)).

Belongs to the AAA ATPase family. RarA/MGS1/WRNIP1 subfamily. As to quaternary structure, forms homooligomers, possibly octamers. Directly interacts with POLD1, POLD2 and POLD4. Interacts with the N-terminal domain of WRN. Interacts (via UBZ4-type zinc finger) with monoubiquitin and polyubiquitin. Interacts with TRIM14 and PPP6C; these interactions positively regulate the RIGI signaling pathway. Post-translationally, sumoylated with SUMO1 and SUMO2/3. As to expression, ubiquitously expressed.

The protein localises to the nucleus. It localises to the cytoplasm. The enzyme catalyses ATP + H2O = ADP + phosphate + H(+). Functionally, functions as a modulator of initiation or reinitiation events during DNA polymerase delta-mediated DNA synthesis. In the presence of ATP, stimulation of DNA polymerase delta-mediated DNA synthesis is decreased. Also plays a role in the innate immune defense against viruses. Stabilizes the RIGI dsRNA interaction and promotes RIGI 'Lys-63'-linked polyubiquitination. In turn, RIGI transmits the signal through mitochondrial MAVS. This Rattus norvegicus (Rat) protein is ATPase WRNIP1.